Consider the following 292-residue polypeptide: Zinc finger protein SNAI3 (292 aa).

An SNAG domain region spans residues 1-20; the sequence is MPRSFLVKTHSSHRVPNYRR. 4 consecutive C2H2-type zinc fingers follow at residues 152 to 174, 183 to 205, 209 to 231, and 237 to 259; these read FECFHCHKPYHTLAGLARHRQLH, FTCKYCDKEYTSLGALKMHIRTH, CTCKICGKAFSRPWLLQGHVRTH, and YACSHCSRAFADRSNLRAHLQTH. A C2H2-type 5; degenerate zinc finger spans residues 265–287; it reads YRCRRCTKTFSRMSLLARHEESG.

Belongs to the snail C2H2-type zinc-finger protein family.

It is found in the nucleus. Its function is as follows. Seems to inhibit myoblast differentiation. Transcriptional repressor of E-box-dependent transactivation of downstream myogenic bHLHs genes. Binds preferentially to the canonical E-box sequences 5'-CAGGTG-3' and 5'-CACCTG-3'. The sequence is that of Zinc finger protein SNAI3 (SNAI3) from Homo sapiens (Human).